A 93-amino-acid polypeptide reads, in one-letter code: HssA/B-like protein 23 (93 aa).

It belongs to the hssA/B family.

The polypeptide is HssA/B-like protein 23 (hssl23) (Dictyostelium discoideum (Social amoeba)).